The sequence spans 506 residues: PHD finger protein 10 (506 aa).

2 disordered regions span residues 1-66 (MAAV…QDFG) and 293-377 (DPEL…SVSG). The span at 23-35 (VKEDNSNDTKDPE) shows a compositional bias: basic and acidic residues. Residues 52-66 (GDSTPSCENSNQDFG) show a composition bias toward polar residues. The tract at residues 90-299 (MLQEQVSEYL…DPLDPELLAL (210 aa)) is SAY. A compositionally biased stretch (low complexity) spans 326-338 (SIDSSSMNMSESD). Positions 353 to 367 (KVKEKSSTPRKEGSK) are enriched in basic and acidic residues. The PHD-type 1; degenerate zinc finger occupies 387-444 (ICGICLKGKDANKKGRSERLIHCSQCDNSGHPSCLDMSAELVAVIKKYPWQCMECKTC). Residues 446–489 (ICGQPHHEEEMMFCDTCDRGYHTFCVGLGALPSGRWICDCCQKV) form a PHD-type 2; degenerate zinc finger.

It belongs to the SAYP family. As to quaternary structure, component of neural progenitors-specific chromatin remodeling complex (npBAF complex), a subfamily of ATP-dependent SWI/SNF chromatin remodeling complexes.

Its subcellular location is the nucleus. Involved in transcription activity regulation by chromatin remodeling in the context of the neural progenitors-specific chromatin remodeling complex (npBAF complex). May play a role in the proliferation of neural progenitors. This chain is PHD finger protein 10 (phf10), found in Xenopus laevis (African clawed frog).